Consider the following 1054-residue polypeptide: Desmoglein-1 (1054 aa).

The signal sequence occupies residues 1-23; the sequence is MNWHFLRTATVLLIFLVVVEINS. The propeptide occupies 24 to 49; that stretch reads EFRIQVRDYNTKNGTIKWHSIRRQKR. 3 N-linked (GlcNAc...) asparagine glycosylation sites follow: asparagine 36, asparagine 110, and asparagine 180. Cadherin domains follow at residues 50–157, 158–269, 270–389, and 386–493; these read EWIK…PPVF, SMST…IPYM, EPSS…RPGS, and RPGS…KDSE. Residues 50–566 are Extracellular-facing; the sequence is EWIKFAAACR…NLSDNVHFGP (517 aa). The tract at residues 487-554 is disordered; that stretch reads GWEKDSEKVT…QSNNNHQELG (68 aa). The span at 496–507 shows a compositional bias: low complexity; sequence TSSQNSGSSTGD. The span at 508-517 shows a compositional bias: gly residues; the sequence is SSGGTGGGGR. Positions 523-534 are enriched in low complexity; sequence GDTTTNTGGKTS. A compositionally biased stretch (polar residues) spans 542-554; the sequence is TQTQSNNNHQELG. The N-linked (GlcNAc...) asparagine glycan is linked to asparagine 557. A helical membrane pass occupies residues 567–587; it reads AGIGLLIMGFLVLGLVPFLLM. Topologically, residues 588 to 1054 are cytoplasmic; the sequence is CCDCGGAPGA…TKYSTVQYTK (467 aa). 5 Desmoglein repeat repeats span residues 830 to 856, 857 to 886, 887 to 916, 917 to 944, and 945 to 973; these read TYPSGPGVQHPMPIPDPLGYGNVTVTE, SYTTSGTLKPTVHVHDNRHASNVVVTERVV, GPISGTDLHGMLEMPDLRDGSNVIVTERVI, APSSSLPTSLTMPDPRESSNVVVTERVI, and RPASGMMGNLSIHPELSNAQNVIVTERVV. The tract at residues 1018-1040 is disordered; the sequence is GHVRSSSDHHFSQTLGSASPSTA. Positions 1029-1040 are enriched in polar residues; the sequence is SQTLGSASPSTA.

As to quaternary structure, binds to JUP/plakoglobin. Interacts with PKP2. Interacts with DSC3; there is evidence to suggest that the interaction promotes cell-cell adhesion of keratinocytes.

The protein resides in the cell membrane. It localises to the cell junction. It is found in the desmosome. Its subcellular location is the cytoplasm. The protein localises to the nucleus. Its function is as follows. Component of intercellular desmosome junctions. Involved in the interaction of plaque proteins and intermediate filaments mediating cell-cell adhesion. In Canis lupus familiaris (Dog), this protein is Desmoglein-1 (DSG1).